A 695-amino-acid chain; its full sequence is Polyribonucleotide nucleotidyltransferase (695 aa).

Mg(2+)-binding residues include D486 and D492. The KH domain maps to 553–612 (PRIETMQINTSKIATVIGPGGKQIRQIIERSGAQVDINDDGVINIAASTQESINKAKELI). The S1 motif domain maps to 622 to 690 (GKVYNGRVTS…EKGQLKLSHK (69 aa)).

It belongs to the polyribonucleotide nucleotidyltransferase family. Mg(2+) serves as cofactor.

Its subcellular location is the cytoplasm. It carries out the reaction RNA(n+1) + phosphate = RNA(n) + a ribonucleoside 5'-diphosphate. In terms of biological role, involved in mRNA degradation. Catalyzes the phosphorolysis of single-stranded polyribonucleotides processively in the 3'- to 5'-direction. This chain is Polyribonucleotide nucleotidyltransferase, found in Chlamydia trachomatis serovar D (strain ATCC VR-885 / DSM 19411 / UW-3/Cx).